The primary structure comprises 174 residues: Transcription antitermination protein NusB (174 aa).

A compositionally biased stretch (polar residues) spans 1-11 (MSEVETTNDQT). Residues 1 to 29 (MSEVETTNDQTPAPKRKDKKPSRSQLRSA) are disordered.

Belongs to the NusB family.

In terms of biological role, involved in transcription antitermination. Required for transcription of ribosomal RNA (rRNA) genes. Binds specifically to the boxA antiterminator sequence of the ribosomal RNA (rrn) operons. This is Transcription antitermination protein NusB from Marinomonas sp. (strain MWYL1).